We begin with the raw amino-acid sequence, 689 residues long: Methionine--tRNA ligase (689 aa).

Positions 15 to 25 match the 'HIGH' region motif; sequence PYANGPVHIGH. Residues Cys147, Cys150, Cys160, and Cys163 each coordinate Zn(2+). The short motif at 342-346 is the 'KMSKS' region element; sequence KISTS. Residue Thr345 coordinates ATP. The tRNA-binding domain maps to 588-689; sequence DFAKMDIRVA…AVVNAGSMIG (102 aa).

Belongs to the class-I aminoacyl-tRNA synthetase family. MetG type 1 subfamily. Homodimer. The cofactor is Zn(2+).

It localises to the cytoplasm. The enzyme catalyses tRNA(Met) + L-methionine + ATP = L-methionyl-tRNA(Met) + AMP + diphosphate. Functionally, is required not only for elongation of protein synthesis but also for the initiation of all mRNA translation through initiator tRNA(fMet) aminoacylation. This chain is Methionine--tRNA ligase, found in Cytophaga hutchinsonii (strain ATCC 33406 / DSM 1761 / CIP 103989 / NBRC 15051 / NCIMB 9469 / D465).